Consider the following 394-residue polypeptide: 8-amino-7-oxononanoate synthase (394 aa).

R21 serves as a coordination point for substrate. Position 112 to 113 (112 to 113) interacts with pyridoxal 5'-phosphate; that stretch reads GY. H137 contacts substrate. Residues S183, H211, and T239 each contribute to the pyridoxal 5'-phosphate site. K242 is subject to N6-(pyridoxal phosphate)lysine. T358 lines the substrate pocket.

This sequence belongs to the class-II pyridoxal-phosphate-dependent aminotransferase family. BioF subfamily. Homodimer. Requires pyridoxal 5'-phosphate as cofactor.

The catalysed reaction is 6-carboxyhexanoyl-[ACP] + L-alanine + H(+) = (8S)-8-amino-7-oxononanoate + holo-[ACP] + CO2. The protein operates within cofactor biosynthesis; biotin biosynthesis. In terms of biological role, catalyzes the decarboxylative condensation of pimeloyl-[acyl-carrier protein] and L-alanine to produce 8-amino-7-oxononanoate (AON), [acyl-carrier protein], and carbon dioxide. The protein is 8-amino-7-oxononanoate synthase of Burkholderia cenocepacia (strain ATCC BAA-245 / DSM 16553 / LMG 16656 / NCTC 13227 / J2315 / CF5610) (Burkholderia cepacia (strain J2315)).